A 279-amino-acid chain; its full sequence is Probable autolysin LDP (279 aa).

The first 24 residues, 1–24 (MKKSLTVTVSSVLAFLALNNAAHA), serve as a signal peptide directing secretion. One can recognise a LysM domain in the interval 51–94 (TTYTVVAGDSLYKIALEHHLTLNQLYSYNPGVTPLIFPGDVISL). The Peptidase C51 domain maps to 158 to 279 (VPTVPVAHNY…LNPGKYNYIH (122 aa)).

It carries out the reaction Hydrolyzes the link between N-acetylmuramoyl residues and L-amino acid residues in certain cell-wall glycopeptides.. Its function is as follows. Has weak lytic activity toward S.aureus cells. In Staphylococcus aureus (strain NCTC 8325 / PS 47), this protein is Probable autolysin LDP.